The chain runs to 377 residues: Adaptive-response sensory kinase SasA (377 aa).

Residues 154–373 (MLVHDLRSPL…SFHFTLPVYR (220 aa)) enclose the Histidine kinase domain. The residue at position 157 (His157) is a Phosphohistidine; by autocatalysis.

As to quaternary structure, homooligomerizes. Interacts with KaiC. Participates in the KaiABC clock complex, whose core is composed of a KaiC homohexamer, 6 KaiB and up to 6 KaiA dimers. SasA and KaiB(fs) compete to bind to KaiC.

The enzyme catalyses ATP + protein L-histidine = ADP + protein N-phospho-L-histidine.. In terms of biological role, member of the two-component regulatory system SasA/RpaA involved in genome-wide circadian gene expression. One of several clock output pathways. Participates in the Kai clock protein complex, the main circadian regulator in cyanobacteria, via its interaction with KaiC. KaiC enhances the autophosphorylation activity of SasA, which then transfers its phosphate group to RpaA to activate it. In addition to its output function, recruits fold-shifted KaiB (KaiB(fs)) to KaiC to cooperatively form the KaiB(6):KaiC(6) complex (independent of SasA kinase activity). Required for robustness of the circadian rhythm of gene expression and is involved in clock output, also required for adaptation to light/dark cycles. The polypeptide is Adaptive-response sensory kinase SasA (Synechococcus sp. (strain JA-2-3B'a(2-13)) (Cyanobacteria bacterium Yellowstone B-Prime)).